Consider the following 337-residue polypeptide: Phosphate acyltransferase (337 aa).

Belongs to the PlsX family. Homodimer. Probably interacts with PlsY.

Its subcellular location is the cytoplasm. It carries out the reaction a fatty acyl-[ACP] + phosphate = an acyl phosphate + holo-[ACP]. It participates in lipid metabolism; phospholipid metabolism. In terms of biological role, catalyzes the reversible formation of acyl-phosphate (acyl-PO(4)) from acyl-[acyl-carrier-protein] (acyl-ACP). This enzyme utilizes acyl-ACP as fatty acyl donor, but not acyl-CoA. The polypeptide is Phosphate acyltransferase (Listeria innocua serovar 6a (strain ATCC BAA-680 / CLIP 11262)).